A 440-amino-acid chain; its full sequence is Serine hydroxymethyltransferase (440 aa).

Residues L119 and 123 to 125 (GHL) contribute to the (6S)-5,6,7,8-tetrahydrofolate site. Position 228 is an N6-(pyridoxal phosphate)lysine (K228). 370-372 (SPF) contributes to the (6S)-5,6,7,8-tetrahydrofolate binding site.

This sequence belongs to the SHMT family. In terms of assembly, homodimer. It depends on pyridoxal 5'-phosphate as a cofactor.

It is found in the cytoplasm. The catalysed reaction is (6R)-5,10-methylene-5,6,7,8-tetrahydrofolate + glycine + H2O = (6S)-5,6,7,8-tetrahydrofolate + L-serine. Its pathway is one-carbon metabolism; tetrahydrofolate interconversion. It functions in the pathway amino-acid biosynthesis; glycine biosynthesis; glycine from L-serine: step 1/1. Catalyzes the reversible interconversion of serine and glycine with tetrahydrofolate (THF) serving as the one-carbon carrier. This reaction serves as the major source of one-carbon groups required for the biosynthesis of purines, thymidylate, methionine, and other important biomolecules. Also exhibits THF-independent aldolase activity toward beta-hydroxyamino acids, producing glycine and aldehydes, via a retro-aldol mechanism. The polypeptide is Serine hydroxymethyltransferase (Chloroherpeton thalassium (strain ATCC 35110 / GB-78)).